A 374-amino-acid polypeptide reads, in one-letter code: tRNA-specific 2-thiouridylase MnmA (374 aa).

Residues 13–20 (GMSGGVDS) and Met-39 contribute to the ATP site. The interval 99-101 (NPD) is interaction with target base in tRNA. Cys-104 acts as the Nucleophile in catalysis. The cysteines at positions 104 and 201 are disulfide-linked. Gly-128 serves as a coordination point for ATP. The interaction with tRNA stretch occupies residues 151–153 (KDQ). Residue Cys-201 is the Cysteine persulfide intermediate of the active site. An interaction with tRNA region spans residues 313–314 (RY).

It belongs to the MnmA/TRMU family.

The protein resides in the cytoplasm. It carries out the reaction S-sulfanyl-L-cysteinyl-[protein] + uridine(34) in tRNA + AH2 + ATP = 2-thiouridine(34) in tRNA + L-cysteinyl-[protein] + A + AMP + diphosphate + H(+). In terms of biological role, catalyzes the 2-thiolation of uridine at the wobble position (U34) of tRNA, leading to the formation of s(2)U34. In Streptococcus equi subsp. zooepidemicus (strain MGCS10565), this protein is tRNA-specific 2-thiouridylase MnmA.